Here is a 111-residue protein sequence, read N- to C-terminus: uncharacterized protein (111 aa).

This is an uncharacterized protein from Enterococcus faecalis (strain ATCC 700802 / V583).